The chain runs to 909 residues: ABC transporter B family member 1 (909 aa).

The disordered stretch occupies residues 1-36 (MTKKNFNDEENESLLETYNKQQQKQSISTTNRSDQK). Positions 14 to 36 (LLETYNKQQQKQSISTTNRSDQK) are enriched in polar residues. The helical transmembrane segment at 85–105 (LFIQIVSLVILAGYLISINAL) threads the bilayer. A compositionally biased stretch (low complexity) spans 125–134 (TDSGSVSPTS). Positions 125–147 (TDSGSVSPTSTPSPTPTPTPSPT) are disordered. The span at 135–145 (TPSPTPTPTPS) shows a compositional bias: pro residues. Transmembrane regions (helical) follow at residues 182 to 202 (FSTF…LLLI), 206 to 226 (SFIY…YNVI), 275 to 295 (IIIV…VLHI), 347 to 367 (LPII…SLAM), 392 to 412 (LALV…SWLF), 480 to 500 (VILL…IVPV), 572 to 592 (GVFS…IVYV), and 607 to 627 (LTSF…ISSL). The ABC transmembrane type-1 domain maps to 350–633 (ILAAMVALVF…ISSLMTDFLK (284 aa)). The 237-residue stretch at 666–902 (IELKDVEFSY…TDGIYHNLVK (237 aa)) folds into the ABC transporter domain. 701-708 (GPSGGGKS) is an ATP binding site.

It belongs to the ABC transporter superfamily. ABCB family.

Its subcellular location is the membrane. This chain is ABC transporter B family member 1 (abcB1), found in Dictyostelium discoideum (Social amoeba).